The sequence spans 226 residues: Exopolysaccharide production protein ExoY (226 aa).

The chain crosses the membrane as a helical span at residues 34–54 (VLIAILALIALSPLFLLVMGL).

It belongs to the bacterial sugar transferase family.

It is found in the cell membrane. Its pathway is glycan metabolism; exopolysaccharide biosynthesis. Needed for the addition of the first sugar (galactose) to the isoprenoid carrier. May function as a sugar transferase. The sequence is that of Exopolysaccharide production protein ExoY (exoY) from Sinorhizobium fredii (strain NBRC 101917 / NGR234).